The chain runs to 2411 residues: Polyprotein P1234 (2411 aa).

Residues 30-257 enclose the Alphavirus-like MT domain; it reads EAVQTTPNDH…ESRKLLQSWH (228 aa). The nsP1 membrane-binding stretch occupies residues 242–261; sequence GSTLYTESRKLLQSWHLPST. Residues cysteine 415 and cysteine 417 are each lipidated (S-palmitoyl cysteine; by host). Residues 688–840 form the (+)RNA virus helicase ATP-binding domain; it reads ELVNPPFHEF…HDICSEVFHK (153 aa). 719–726 is an a ribonucleoside 5'-triphosphate binding site; that stretch reads GVPGSGKS. The (+)RNA virus helicase C-terminal domain occupies 841–989; the sequence is SISRRCTQDI…IAEWEAEHQG (149 aa). In terms of domain architecture, Peptidase C9 spans 1002 to 1325; that stretch reads NTFMNKVNVC…RKANSIFQNT (324 aa). The segment at 1003 to 1022 is nucleolus localization signal; that stretch reads TFMNKVNVCWAKTLTPVLET. The active-site For cysteine protease nsP2 activity is the cysteine 1011. The Nuclear export signal motif lies at 1056–1065; that stretch reads TKMYGFDLDT. The For cysteine protease nsP2 activity role is filled by histidine 1081. The short motif at 1180–1184 is the Nuclear localization signal element; the sequence is PNKKI. Residues 1332–1491 enclose the Macro domain; it reads APAYRVKRGD…KIKEAIDHRT (160 aa). The ADP-D-ribose site is built by aspartate 1341, asparagine 1355, glycine 1363, glycine 1443, isoleucine 1444, and tyrosine 1445. Zn(2+)-binding residues include cysteine 1593, cysteine 1595, cysteine 1618, and cysteine 1636. The interval 1681-1720 is disordered; sequence DSSIGSLPVGDTRPIPAPRTIFRPVPAPRAPVLRTTPPPK. Short sequence motifs (FGDF; binding to host G3BP1) lie at residues 1760-1763 and 1778-1781; these read FGDF. The RdRp catalytic domain maps to 2165–2280; that stretch reads DHVLETDIAS…HGIISDKLMA (116 aa).

As to quaternary structure, interacts with non-structural protein 3. Interacts with RNA-directed RNA polymerase nsP4. Interacts with protease nsP2. interacts with itself. In terms of assembly, interacts with mRNA-capping enzyme nsP1. Interacts with host DDX1. Interacts with host DDX3. Interacts (via C-terminus) with host G3BP1; this interaction inhibits the formation of host stress granules on viral mRNAs and the nsp3-G3BP1 complexes bind viral RNAs and probably orchestrate the assembly of viral replication complexes. Interacts (via C-terminus) with host G3BP2; this interaction inhibits the formation of host stress granules on viral mRNAs and the nsp3-G3BP2 complexes bind viral RNAs and probably orchestrate the assembly of viral replication complexes. Interacts with mRNA-capping enzyme nsP1. Interacts with protease nsP2. interacts with itself. As to quaternary structure, interacts with RNA-directed RNA polymerase nsP4. Interacts with mRNA-capping enzyme nsP1. Interacts with KPNA1/karyopherin-alpha1; this interaction probably allows the active transport of protease nsP2 into the host nucleus. Mg(2+) serves as cofactor. Mn(2+) is required as a cofactor. Specific enzymatic cleavages in vivo yield mature proteins. The processing of the polyprotein is temporally regulated. In early stages (1.7 hpi), P1234 is first cleaved in trans through its nsP2 protease activity, releasing P123' and nsP4, which associate to form the early replication complex. At the same time, P1234 is also cut at the nsP1/nsP2 site early in infection but with lower efficiency. After replication of the viral minus-strand RNAs (4 hpi), the polyproteins are cut at the nsP1/nsP2 and nsP2/nsP3 sites very efficiently, preventing accumulation of P123' and P1234 and allowing the formation of the late replication complex. NsP3'/nsP4 site is not cleaved anymore and P34 is produced rather than nsP4. In terms of processing, specific enzymatic cleavages in vivo yield mature proteins. The processing of the polyprotein is temporally regulated. In early stages (1.7 hpi), P123 is cleaved at the nsP1/nsP2 site with low efficiency. After replication of the viral minus-strand RNAs (4 hpi), the polyproteins are cut at the nsP1/nsP2 and nsP2/nsP3 sites very efficiently, preventing accumulation of P123 and allowing the formation of the late replication complex. Post-translationally, specific enzymatic cleavages in vivo yield mature proteins. The processing of the polyprotein is temporally regulated. In early stages (1.7 hpi), P123' is cleaved at the nsP1/nsP2 site with low efficiency. After replication of the viral minus-strand RNAs (4 hpi), the polyproteins are cut at the nsP1/nsP2 and nsP2/nsP3 sites very efficiently, preventing accumulation of P123' and allowing the formation of the late replication complex. Palmitoylated by host palmitoyltransferases ZDHHC2 and ZDHHC19. In terms of processing, phosphorylated by host on serines and threonines. Post-translationally, ubiquitinated; targets the protein for rapid degradation via the ubiquitin system. Nsp4 is present in extremely low quantities due to low frequency of translation through the amber stop-codon and the degradation by the ubiquitin pathway.

Its subcellular location is the host cytoplasmic vesicle membrane. The protein resides in the host cell membrane. It is found in the host cell projection. It localises to the host filopodium. The protein localises to the host nucleus. Its subcellular location is the host cytoplasm. The enzyme catalyses GTP + S-adenosyl-L-methionine = N(7)-methyl-GTP + S-adenosyl-L-homocysteine. It catalyses the reaction N(7)-methyl-GTP + L-histidyl-[protein] = N(tele)-(N(7)-methylguanosine 5'-phospho)-L-histidyl-[protein] + diphosphate. It carries out the reaction N(tele)-(N(7)-methylguanosine 5'-phospho)-L-histidyl-[protein] + a 5'-end diphospho-(purine-ribonucleoside) in mRNA + H(+) = a 5'-end (N(7)-methyl 5'-triphosphoguanosine)-(purine-ribonucleoside) in mRNA + L-histidyl-[protein]. The catalysed reaction is a 5'-end triphospho-ribonucleoside in mRNA + H2O = a 5'-end diphospho-ribonucleoside in mRNA + phosphate + H(+). The enzyme catalyses a ribonucleoside 5'-triphosphate + H2O = a ribonucleoside 5'-diphosphate + phosphate + H(+). It catalyses the reaction ATP + H2O = ADP + phosphate + H(+). It carries out the reaction RNA(n) + a ribonucleoside 5'-triphosphate = RNA(n+1) + diphosphate. The catalysed reaction is RNA(n) + ATP = RNA(n)-3'-adenine ribonucleotide + diphosphate. The enzyme catalyses 4-O-(ADP-D-ribosyl)-L-aspartyl-[protein] + H2O = L-aspartyl-[protein] + ADP-D-ribose + H(+). It catalyses the reaction 5-O-(ADP-D-ribosyl)-L-glutamyl-[protein] + H2O = L-glutamyl-[protein] + ADP-D-ribose + H(+). It carries out the reaction ADP-alpha-D-ribose 1''-phosphate + H2O = ADP-D-ribose + phosphate. Functionally, inactive precursor of the viral replicase, which is activated by cleavages carried out by the viral protease nsP2. The early replication complex formed by the polyprotein P123 and nsP4 synthesizes minus-strand RNAs. As soon P123 is cleaved into mature proteins, the plus-strand RNAs synthesis begins. In terms of biological role, the early replication complex formed by the polyprotein P123' and nsP4 synthesizes minus-strand RNAs. Polyprotein P123' is a short-lived polyprotein that accumulates during early stage of infection. As soon P123' is cleaved into mature proteins, the plus-strand RNAs synthesis begins. Its function is as follows. Cytoplasmic capping enzyme that catalyzes two virus-specific reactions: methyltransferase and nsP1 guanylyltransferase. mRNA-capping is necessary since all viral RNAs are synthesized in the cytoplasm, and host capping enzymes are restricted to the nucleus. The enzymatic reaction involves a covalent link between 7-methyl-GMP and nsP1, whereas eukaryotic capping enzymes form a covalent complex only with GMP. nsP1 capping consists in the following reactions: GTP is first methylated into 7-methyl-GMP and then is covalently linked to nsP1 to form the m7GMp-nsP1 complex from which 7-methyl-GMP complex is transferred to the mRNA to create the cap structure. NsP1 is needed for the initiation of the minus-strand RNAs synthesis. Probably serves as a membrane anchor for the replication complex composed of nsP1-nsP4. Palmitoylated nsP1 is remodeling host cell cytoskeleton, and induces filopodium-like structure formation at the surface of the host cell. Functionally, multifunctional protein whose N-terminus is part of the RNA polymerase complex and displays NTPase, RNA triphosphatase and helicase activities. NTPase and RNA triphosphatase are involved in viral RNA capping and helicase keeps a check on the dsRNA replication intermediates. The C-terminus harbors a protease that specifically cleaves the polyproteins and releases the mature proteins. Required for the shutoff of minus-strand RNAs synthesis. Specifically inhibits the host IFN response by promoting the nuclear export of host STAT1. Also inhibits host transcription by inducing rapid proteasome-dependent degradation of POLR2A, a catalytic subunit of the RNAPII complex. The resulting inhibition of cellular protein synthesis serves to ensure maximal viral gene expression and to evade host immune response. Seems to be essential for minus-strand RNAs and subgenomic 26S mRNAs synthesis. Displays mono-ADP-ribosylhydrolase activity. ADP-ribosylation is a post-translational modification that controls various processes of the host cell and the virus probably needs to revert it for optimal viral replication. Binds proteins of FXR family and sequesters them into the viral RNA replication complexes thereby inhibiting the formation of host stress granules on viral mRNAs. The nsp3-FXR complexes bind viral RNAs and probably orchestrate the assembly of viral replication complexes, thanks to the ability of FXR family members to self-assemble and bind DNA. In terms of biological role, seems to be essential for minus-strand RNAs and subgenomic 26S mRNAs synthesis. Displays mono-ADP-ribosylhydrolase activity. ADP-ribosylation is a post-translantional modification that controls various processes of the host cell and the virus probably needs to revert it for optimal viral replication. Binds proteins of G3BP family and sequesters them into the viral RNA replication complexes thereby inhibiting the formation of host stress granules on viral mRNAs. The nsp3'-G3BP complexes bind viral RNAs and probably orchestrate the assembly of viral replication complexes, thanks to the ability of G3BP family members to self-assemble and bind DNA. Its function is as follows. RNA dependent RNA polymerase. Replicates genomic and antigenomic RNA by recognizing replications specific signals. The early replication complex formed by the polyprotein P123 and nsP4 synthesizes minus-strand RNAs. The late replication complex composed of fully processed nsP1-nsP4 is responsible for the production of genomic and subgenomic plus-strand RNAs. The core catalytic domain of nsP4 also possesses terminal adenylyltransferase (TATase) activity that is probably involved in maintenance and repair of the poly(A) tail, an element required for replication of the viral genome. In Barmah forest virus (BFV), this protein is Polyprotein P1234.